Reading from the N-terminus, the 414-residue chain is Cytochrome P450 GfsF (414 aa).

Positions 1–32 are disordered; the sequence is MTDTTLVEAGDPAEDAPEWPMKRDTGCPFDPP. Heme b is bound by residues His-75, His-107, Arg-111, Arg-303, His-361, and Cys-363.

This sequence belongs to the cytochrome P450 family. In terms of assembly, monomer. Heme b serves as cofactor.

Its pathway is antibiotic biosynthesis. Its function is as follows. Involved in the synthesis of the 16-membered macrolide antibiotics FD-891 and FD-892. Consecutively catalyzes epoxidation of C8-C9 and then hydroxylation at C10 to convert 25-O-methyl-FD-892 to FD-891. Consecutively catalyzes epoxidation of C8-C9 and then hydroxylation at C10 to convert 8,9-epoxy-FD-892 to 25-O-demethyl-FD-891 as well as converting 25-oxo-FD-892 to 8,9-epoxy-25-oxo-FD-892 and 8,9-epoxy-10-hydroxy-25-oxo-FD-892. In vitro is furnished with P.putida putidaredoxin and putidaredoxin reductase to provide the required two-electron reduction. This is Cytochrome P450 GfsF from Streptomyces halstedii.